Reading from the N-terminus, the 357-residue chain is Protein-glutamate methylesterase/protein-glutamine glutaminase 1 (357 aa).

One can recognise a Response regulatory domain in the interval 10–127 (RTLIVDDSAF…DVNKIEKELV (118 aa)). A 4-aspartylphosphate modification is found at aspartate 61. A CheB-type methylesterase domain is found at 159–353 (SCAGDFAVLI…EEIVRMSEVK (195 aa)). Catalysis depends on residues serine 171, histidine 198, and aspartate 295.

It belongs to the CheB family. Post-translationally, phosphorylated by CheA. Phosphorylation of the N-terminal regulatory domain activates the methylesterase activity.

Its subcellular location is the cytoplasm. The enzyme catalyses [protein]-L-glutamate 5-O-methyl ester + H2O = L-glutamyl-[protein] + methanol + H(+). It carries out the reaction L-glutaminyl-[protein] + H2O = L-glutamyl-[protein] + NH4(+). Involved in chemotaxis. Part of a chemotaxis signal transduction system that modulates chemotaxis in response to various stimuli. Catalyzes the demethylation of specific methylglutamate residues introduced into the chemoreceptors (methyl-accepting chemotaxis proteins or MCP) by CheR. Also mediates the irreversible deamidation of specific glutamine residues to glutamic acid. The protein is Protein-glutamate methylesterase/protein-glutamine glutaminase 1 of Methanosarcina mazei (strain ATCC BAA-159 / DSM 3647 / Goe1 / Go1 / JCM 11833 / OCM 88) (Methanosarcina frisia).